We begin with the raw amino-acid sequence, 288 residues long: Protease HtpX homolog (288 aa).

2 helical membrane passes run 7 to 27 (TAVL…MLGG) and 29 to 49 (QGML…YWFS). H131 contributes to the Zn(2+) binding site. Residue E132 is part of the active site. H135 is a Zn(2+) binding site. Transmembrane regions (helical) follow at residues 141–161 (ILIS…ANFA) and 177–197 (IASL…QMSI). E202 is a Zn(2+) binding site.

Belongs to the peptidase M48B family. Zn(2+) serves as cofactor.

The protein localises to the cell inner membrane. The chain is Protease HtpX homolog from Polynucleobacter necessarius subsp. necessarius (strain STIR1).